The chain runs to 412 residues: Trehalose synthase (412 aa).

The protein belongs to the glycosyltransferase group 1 family. Glycosyltransferase 4 subfamily. As to quaternary structure, homodimer. The cofactor is Mg(2+).

The catalysed reaction is an NDP-alpha-D-glucose + D-glucose = alpha,alpha-trehalose + a ribonucleoside 5'-diphosphate + H(+). Its function is as follows. Synthesizes trehalose from ADP-glucose and glucose. Has a much lower activity toward UDP-glucose and GDP-glucose. The reaction is reversible, the equilibrium strongly favors trehalose synthesis. In Pyrococcus furiosus (strain ATCC 43587 / DSM 3638 / JCM 8422 / Vc1), this protein is Trehalose synthase.